The primary structure comprises 130 residues: UPF0102 protein BT_1882 (130 aa).

It belongs to the UPF0102 family.

The protein is UPF0102 protein BT_1882 of Bartonella tribocorum (strain CIP 105476 / IBS 506).